A 553-amino-acid polypeptide reads, in one-letter code: Hydroxylamine reductase (553 aa).

The [2Fe-2S] cluster site is built by C3, C6, C18, and C25. Hybrid [4Fe-2O-2S] cluster is bound by residues H252, E276, C320, C408, C436, C461, E495, and K497. C408 is modified (cysteine persulfide).

This sequence belongs to the HCP family. [2Fe-2S] cluster is required as a cofactor. It depends on hybrid [4Fe-2O-2S] cluster as a cofactor.

It is found in the cytoplasm. It catalyses the reaction A + NH4(+) + H2O = hydroxylamine + AH2 + H(+). Catalyzes the reduction of hydroxylamine to form NH(3) and H(2)O. This Aliivibrio fischeri (strain MJ11) (Vibrio fischeri) protein is Hydroxylamine reductase.